The sequence spans 1179 residues: ATP-dependent helicase/deoxyribonuclease subunit B (1179 aa).

This sequence belongs to the helicase family. AddB/RexB type 2 subfamily. In terms of assembly, heterodimer of AddA and RexB. Mg(2+) is required as a cofactor.

The heterodimer acts as both an ATP-dependent DNA helicase and an ATP-dependent, dual-direction single-stranded exonuclease. Recognizes the chi site generating a DNA molecule suitable for the initiation of homologous recombination. This subunit has 5' -&gt; 3' nuclease activity but not helicase activity. This chain is ATP-dependent helicase/deoxyribonuclease subunit B, found in Lacticaseibacillus casei (strain BL23) (Lactobacillus casei).